The primary structure comprises 254 residues: Uridine-cytidine kinase 1 (254 aa).

A disordered region spans residues 1–29; it reads MASAGGDECEGAAPEADRPHQRPFLIGVS. 30 to 38 contacts ATP; sequence GGTASGKST. Residues aspartate 87, tyrosine 115, histidine 120, arginine 146, arginine 155, and glutamine 163 each contribute to the substrate site. Aspartate 192 contributes to the ATP binding site. Positions 224-254 are disordered; it reads SYKRTFSEPGDHPGMLTSGKRSHLESSSRPH. Threonine 228 carries the phosphothreonine modification. Serine 230 carries the post-translational modification Phosphoserine. A compositionally biased stretch (basic and acidic residues) spans 245–254; the sequence is SHLESSSRPH.

It belongs to the uridine kinase family.

The enzyme catalyses uridine + ATP = UMP + ADP + H(+). It catalyses the reaction cytidine + ATP = CMP + ADP + H(+). The protein operates within pyrimidine metabolism; CTP biosynthesis via salvage pathway; CTP from cytidine: step 1/3. It participates in pyrimidine metabolism; UMP biosynthesis via salvage pathway; UMP from uridine: step 1/1. Its function is as follows. Phosphorylates uridine and cytidine to uridine monophosphate and cytidine monophosphate. Does not phosphorylate deoxyribonucleosides or purine ribonucleosides. Can use ATP or GTP as a phosphate donor. This chain is Uridine-cytidine kinase 1 (UCK1), found in Macaca fascicularis (Crab-eating macaque).